The following is a 317-amino-acid chain: Tumor necrosis factor ligand superfamily member 11 (317 aa).

Over residues Met1–Glu16 the composition is skewed to basic and acidic residues. Residues Met1–Ala43 are disordered. Topologically, residues Met1–Ser47 are cytoplasmic. Positions His31–Pro41 are enriched in pro residues. Residues Met48 to Phe68 traverse the membrane as a helical; Signal-anchor for type II membrane protein segment. Residues Tyr69–Asp317 are Extracellular-facing. The THD domain maps to Pro164–Val313. Asn171 and Asn198 each carry an N-linked (GlcNAc...) asparagine glycan.

The protein belongs to the tumor necrosis factor family. In terms of assembly, homotrimer. Interacts with TNFRSF11B. Interacts with TNFRSF11A. Interacts with FBN1 (via N-terminal domain) in a Ca(+2)-dependent manner. Interacts with TNFAIP6 (via both Link and CUB domains). Post-translationally, the soluble form of isoform 1 derives from the membrane form by proteolytic processing. The cleavage may be catalyzed by ADAM17. As to expression, highest in the peripheral lymph nodes, weak in spleen, peripheral blood Leukocytes, bone marrow, heart, placenta, skeletal muscle, stomach and thyroid.

Its subcellular location is the cell membrane. It localises to the cytoplasm. The protein localises to the secreted. Cytokine that binds to TNFRSF11B/OPG and to TNFRSF11A/RANK. Osteoclast differentiation and activation factor. Augments the ability of dendritic cells to stimulate naive T-cell proliferation. May be an important regulator of interactions between T-cells and dendritic cells and may play a role in the regulation of the T-cell-dependent immune response. May also play an important role in enhanced bone-resorption in humoral hypercalcemia of malignancy. Induces osteoclastogenesis by activating multiple signaling pathways in osteoclast precursor cells, chief among which is induction of long lasting oscillations in the intracellular concentration of Ca (2+) resulting in the activation of NFATC1, which translocates to the nucleus and induces osteoclast-specific gene transcription to allow differentiation of osteoclasts. During osteoclast differentiation, in a TMEM64 and ATP2A2-dependent manner induces activation of CREB1 and mitochondrial ROS generation necessary for proper osteoclast generation. The sequence is that of Tumor necrosis factor ligand superfamily member 11 (TNFSF11) from Homo sapiens (Human).